The sequence spans 603 residues: Protein SHORT-ROOT 2 (603 aa).

Disordered stretches follow at residues 11–58 and 106–140; these read HHHH…HSHS and DFSSSSSSRQFHSGTGAPSSAPVPPPPSATTSSAG. The span at 31–44 shows a compositional bias: low complexity; the sequence is SYPSSRGSTSSPSS. Positions 45–58 are enriched in basic residues; it reads HHTHNHTYYHHSHS. Positions 108-125 are enriched in low complexity; the sequence is SSSSSSRQFHSGTGAPSS. Residues 179 to 602 enclose the GRAS domain; sequence AAPSSSGRWA…QPVVWASAWK (424 aa). A leucine repeat I (LRI) region spans residues 186–249; it reads RWAAQLLMEC…LTTSGPRTLR (64 aa). The interval 268 to 354 is VHIID; the sequence is ALKFQELSPW…DTPHLSITTV (87 aa). The short motif at 318–322 is the VHIID element; it reads LHILD. The tract at residues 370–406 is leucine repeat II (LRII); it reads EIGQRLEKFARLMGVPFSFRAVHHSGDLADLDLAALD. Positions 416-514 are PFYRE; it reads LAVNCVNALR…ERAVGRAIVD (99 aa). Residues 517–602 form an SAW region; it reads SCPASQSAER…QPVVWASAWK (86 aa).

The protein belongs to the GRAS family. In terms of assembly, does not interact with SCR1.

It localises to the nucleus. Putative transcription factor involved in asymmetric cell division. This is Protein SHORT-ROOT 2 (SHR2) from Oryza sativa subsp. japonica (Rice).